Here is a 317-residue protein sequence, read N- to C-terminus: Ferrochelatase (317 aa).

Residues His-192 and Glu-271 each contribute to the Fe cation site.

This sequence belongs to the ferrochelatase family.

It localises to the cytoplasm. The enzyme catalyses heme b + 2 H(+) = protoporphyrin IX + Fe(2+). It participates in porphyrin-containing compound metabolism; protoheme biosynthesis; protoheme from protoporphyrin-IX: step 1/1. Its function is as follows. Catalyzes the ferrous insertion into protoporphyrin IX. This is Ferrochelatase from Geobacter metallireducens (strain ATCC 53774 / DSM 7210 / GS-15).